We begin with the raw amino-acid sequence, 171 residues long: Anthrone oxygenase dmxR16 (171 aa).

Transmembrane regions (helical) follow at residues valine 21 to isoleucine 41, glycine 67 to leucine 87, and tyrosine 96 to proline 116. N-linked (GlcNAc...) asparagine glycans are attached at residues asparagine 118 and asparagine 129. The chain crosses the membrane as a helical span at residues tryptophan 145–isoleucine 165.

This sequence belongs to the anthrone oxygenase family.

It is found in the membrane. The enzyme catalyses emodin anthrone + O2 = emodin + H2O + H(+). It functions in the pathway secondary metabolite biosynthesis. Functionally, anthrone oxygenase; part of the gene cluster that mediates the biosynthesis of the dimeric xanthones cryptosporioptides. The pathway begins with the synthesis of atrochrysone thioester by the polyketide synthase dmx-nrPKS. The atrochrysone carboxyl ACP thioesterase dmxR1 then breaks the thioester bond and releases the atrochrysone carboxylic acid from dmx-nrPKS. Atrochrysone carboxylic acid is decarboxylated by the decarboxylase dmxR15, and oxidized by the anthrone oxygenase dmxR16 to yield emodin. Emodin is then reduced to emodin hydroquinone by the oxidoreductase dmxR7. A-ring reduction by the short chain dehydrogenase dmxR18, dehydration by the scytalone dehydratase-like protein dmxR17 and probable spontaneous re-oxidation, results in overall deoxygenation to chrysophanol. Baeyer-Villiger oxidation by the Baeyer-Villiger monooxygenase (BVMO) dmxR6 then yields monodictylactone in equilibrium with monodictyphenone. In the case of the cryptosporioptides biosynthesis, monodictylactone is reduced at C-12 to an alcohol (by the short chain dehydrogenases dmxR12 or dmxR8) and hydroxylated at C-5 by dmxR9, yielding the electron-rich aromatic which could eliminate H(2)O to form the ortho-quinonemethide, followed by tautomerisation to paraquinone and complete the formal reduction to produce the 10-methylgroup. Conjugate addition of C-4a-OH to the resulting paraquinone by the monooxygenase dmxR10 then gives cyclohexadienone, which is then reduced at C-5 by the short chain dehydrogenase dmxR3 to give the dihydroxanthone. The 6,7-epoxide in the cryptosporioptides could be introduced by the cytochrome P450 monooxygenase dmxL3. The highly reducing PKS dmxL2 manufactures butyrate, which is further carboxylated by dmxL1 to form ethylmalonate. It is not yet clear whether the carboxylation occurs while the butyrate is attached to the ACP of dmxL2, but this unusual fungal metabolite could then be esterified to O-5 by the O-acetyltransferase dmxR13. Finally, dimerization performed by dmxR5 gives the observed dimers cryptosporioptides A, B and C as the final products of the pathway. This is Anthrone oxygenase dmxR16 from Cryptosporiopsis sp. (strain 8999).